The chain runs to 489 residues: MTFRHCVAVDLGASSGRVMLARYDSKHRTLTLREIHRFVNCLQKTDGFDTWDIDSLEKDIRLGLKKVCNEGILIDSIGIDTWGVDYVLLDKQGQRVGLPVSYRDNRTTGIMPQALVQIGKSEIYRRSGIQFLPFNTIYQLRALTKQQPELTAQVAHALLMPDYFSYRLTGEMNWEYTNATTTQLVNINTDDWDDTLLAWTGAKKSWFGRPSHPGNVIGDWICPQGNRIPVVAVASHDTASAVIASPLANKHSAYLSSGTWSLMGFESKMPYTTDEALAANITNEGGAEGRYRVLKNIMGLWLLQRVLKERRITDLPALIAQTEALPACRFLINPNDDRFINPDDMRAEIQAACRETDQPVPVSDAELARCIFDSLALLYADILHEQANLRGEKFTQLHIVGGGCQNSLLNQLCADACGIRVMAGPVEASTLGNIGIQLMTLDELNNVDDFRQVVSANYDLTTYIPNPDSEIARHVAQFQPKRQTKELCA.

An ATP-binding site is contributed by 13–17; sequence ASSGR. A disulfide bond links C68 and C222. Substrate-binding positions include G83 and 236-238; that span reads HDT. Catalysis depends on D237, which acts as the Proton acceptor. Residue T259 participates in ATP binding. N296 contributes to the substrate binding site. Residue Q304 coordinates ATP. C353 and C370 are joined by a disulfide. ATP is bound at residue G402. Cysteines 413 and 417 form a disulfide.

Belongs to the rhamnulokinase family. Mg(2+) is required as a cofactor.

It carries out the reaction L-rhamnulose + ATP = L-rhamnulose 1-phosphate + ADP + H(+). It participates in carbohydrate degradation; L-rhamnose degradation; glycerone phosphate from L-rhamnose: step 2/3. Its function is as follows. Involved in the catabolism of L-rhamnose (6-deoxy-L-mannose). Catalyzes the transfer of the gamma-phosphate group from ATP to the 1-hydroxyl group of L-rhamnulose to yield L-rhamnulose 1-phosphate. In Salmonella typhimurium (strain LT2 / SGSC1412 / ATCC 700720), this protein is Rhamnulokinase.